A 306-amino-acid polypeptide reads, in one-letter code: UDP-3-O-acyl-N-acetylglucosamine deacetylase (306 aa).

3 residues coordinate Zn(2+): His-79, His-238, and Asp-242. Residue His-265 is the Proton donor of the active site.

The protein belongs to the LpxC family. Zn(2+) is required as a cofactor.

It catalyses the reaction a UDP-3-O-[(3R)-3-hydroxyacyl]-N-acetyl-alpha-D-glucosamine + H2O = a UDP-3-O-[(3R)-3-hydroxyacyl]-alpha-D-glucosamine + acetate. It functions in the pathway glycolipid biosynthesis; lipid IV(A) biosynthesis; lipid IV(A) from (3R)-3-hydroxytetradecanoyl-[acyl-carrier-protein] and UDP-N-acetyl-alpha-D-glucosamine: step 2/6. Catalyzes the hydrolysis of UDP-3-O-myristoyl-N-acetylglucosamine to form UDP-3-O-myristoylglucosamine and acetate, the committed step in lipid A biosynthesis. This chain is UDP-3-O-acyl-N-acetylglucosamine deacetylase, found in Shewanella baltica (strain OS223).